Here is a 110-residue protein sequence, read N- to C-terminus: Flagellar hook-basal body complex protein FliE (110 aa).

It belongs to the FliE family.

It is found in the bacterial flagellum basal body. The polypeptide is Flagellar hook-basal body complex protein FliE (Pseudomonas putida (strain GB-1)).